The chain runs to 365 residues: Succinyl-diaminopimelate desuccinylase (365 aa).

Zn(2+) is bound at residue H64. D66 is a catalytic residue. D95 serves as a coordination point for Zn(2+). E125 serves as the catalytic Proton acceptor. Positions 126, 154, and 339 each coordinate Zn(2+).

It belongs to the peptidase M20A family. DapE subfamily. Homodimer. Zn(2+) serves as cofactor. Requires Co(2+) as cofactor.

It catalyses the reaction N-succinyl-(2S,6S)-2,6-diaminopimelate + H2O = (2S,6S)-2,6-diaminopimelate + succinate. It functions in the pathway amino-acid biosynthesis; L-lysine biosynthesis via DAP pathway; LL-2,6-diaminopimelate from (S)-tetrahydrodipicolinate (succinylase route): step 3/3. Catalyzes the hydrolysis of N-succinyl-L,L-diaminopimelic acid (SDAP), forming succinate and LL-2,6-diaminopimelate (DAP), an intermediate involved in the bacterial biosynthesis of lysine and meso-diaminopimelic acid, an essential component of bacterial cell walls. The polypeptide is Succinyl-diaminopimelate desuccinylase (Campylobacter fetus subsp. fetus (strain 82-40)).